The primary structure comprises 461 residues: Bifunctional protein GlmU (461 aa).

Residues 1–229 form a pyrophosphorylase region; the sequence is MEKYVVVLAA…FSESLGVNDR (229 aa). UDP-N-acetyl-alpha-D-glucosamine-binding positions include 8 to 11, K22, Q72, and 77 to 78; these read LAAG and GT. D102 provides a ligand contact to Mg(2+). The UDP-N-acetyl-alpha-D-glucosamine site is built by G139, E154, N169, and N227. A Mg(2+)-binding site is contributed by N227. The tract at residues 230 to 250 is linker; sequence IALAEATRIMQRRINEGHMRD. Residues 251–461 are N-acetyltransferase; that stretch reads GVTFIDPATA…LPLSEDEEWK (211 aa). R332 and K350 together coordinate UDP-N-acetyl-alpha-D-glucosamine. H362 serves as the catalytic Proton acceptor. The UDP-N-acetyl-alpha-D-glucosamine site is built by Y365 and N376. Acetyl-CoA-binding residues include A422 and R439.

The protein in the N-terminal section; belongs to the N-acetylglucosamine-1-phosphate uridyltransferase family. This sequence in the C-terminal section; belongs to the transferase hexapeptide repeat family. As to quaternary structure, homotrimer. Requires Mg(2+) as cofactor.

The protein resides in the cytoplasm. The catalysed reaction is alpha-D-glucosamine 1-phosphate + acetyl-CoA = N-acetyl-alpha-D-glucosamine 1-phosphate + CoA + H(+). It carries out the reaction N-acetyl-alpha-D-glucosamine 1-phosphate + UTP + H(+) = UDP-N-acetyl-alpha-D-glucosamine + diphosphate. It participates in nucleotide-sugar biosynthesis; UDP-N-acetyl-alpha-D-glucosamine biosynthesis; N-acetyl-alpha-D-glucosamine 1-phosphate from alpha-D-glucosamine 6-phosphate (route II): step 2/2. Its pathway is nucleotide-sugar biosynthesis; UDP-N-acetyl-alpha-D-glucosamine biosynthesis; UDP-N-acetyl-alpha-D-glucosamine from N-acetyl-alpha-D-glucosamine 1-phosphate: step 1/1. It functions in the pathway bacterial outer membrane biogenesis; LPS lipid A biosynthesis. Catalyzes the last two sequential reactions in the de novo biosynthetic pathway for UDP-N-acetylglucosamine (UDP-GlcNAc). The C-terminal domain catalyzes the transfer of acetyl group from acetyl coenzyme A to glucosamine-1-phosphate (GlcN-1-P) to produce N-acetylglucosamine-1-phosphate (GlcNAc-1-P), which is converted into UDP-GlcNAc by the transfer of uridine 5-monophosphate (from uridine 5-triphosphate), a reaction catalyzed by the N-terminal domain. In Lactobacillus delbrueckii subsp. bulgaricus (strain ATCC 11842 / DSM 20081 / BCRC 10696 / JCM 1002 / NBRC 13953 / NCIMB 11778 / NCTC 12712 / WDCM 00102 / Lb 14), this protein is Bifunctional protein GlmU.